The following is a 532-amino-acid chain: Developmental and secondary metabolism regulator ve1 (532 aa).

Positions 26-220 constitute a Velvet domain; sequence NRSLWYQLTV…ADQGCRVRIR (195 aa). Positions 40–45 match the Nuclear localization signal motif; sequence ERARAC. Over residues 217-229 the composition is skewed to basic residues; that stretch reads VRIRRDVRMRKRD. 2 disordered regions span residues 217–440 and 458–520; these read VRIR…TEPS and PQVD…RADG. Residues 233–250 show a composition bias toward low complexity; sequence GGNNNNNNNAGNNAGNNG. Composition is skewed to basic and acidic residues over residues 251–260 and 283–294; these read FERREEDFGR and SEHRASYSDVSR. Residues 302 to 317 are compositionally biased toward pro residues; sequence YPPPPPPPPSYDPTPS. Over residues 397–411 the composition is skewed to low complexity; sequence STSTYVPPSPSVYST. Positions 435-463 are PEST; that stretch reads MNTEPSRGSIKISALVEPMPVIEPQVDPL. The segment covering 481–493 has biased composition (polar residues); it reads FAQNTRPLFNGQR.

This sequence belongs to the velvet family. VeA subfamily. As to quaternary structure, component of the heterotrimeric velvet complex composed of laeA, ve1 and velB; Ve1 acting as a bridging protein between laeA and velB. Interacts directly with laeA and velB.

It localises to the nucleus. The protein localises to the cytoplasm. Its function is as follows. Component of the velvet transcription factor complex that controls sexual/asexual developmental ratio in response to light, promoting sexual development in the darkness while stimulating asexual sporulation under illumination. The velvet complex hat acts as a global regulator for secondary metabolite gene expression. Controls the expression of the aurofusarin and trichothecene gene clusters. Also controls the expression of the deoxynivalenol (DON) gene cluster. Regulates hyphal growth and pigment formation. Acts as a positive regulator of virulence. The protein is Developmental and secondary metabolism regulator ve1 of Gibberella zeae (strain ATCC MYA-4620 / CBS 123657 / FGSC 9075 / NRRL 31084 / PH-1) (Wheat head blight fungus).